The sequence spans 317 residues: Transaldolase (317 aa).

Lys126 (schiff-base intermediate with substrate) is an active-site residue.

It belongs to the transaldolase family. Type 1 subfamily. In terms of assembly, homodimer.

It is found in the cytoplasm. The catalysed reaction is D-sedoheptulose 7-phosphate + D-glyceraldehyde 3-phosphate = D-erythrose 4-phosphate + beta-D-fructose 6-phosphate. Its pathway is carbohydrate degradation; pentose phosphate pathway; D-glyceraldehyde 3-phosphate and beta-D-fructose 6-phosphate from D-ribose 5-phosphate and D-xylulose 5-phosphate (non-oxidative stage): step 2/3. In terms of biological role, transaldolase is important for the balance of metabolites in the pentose-phosphate pathway. In Burkholderia mallei (strain SAVP1), this protein is Transaldolase.